We begin with the raw amino-acid sequence, 628 residues long: MAELGELKHMVMSFRVSELQVLLGFAGRNKSGRKHELLAKALHLLKSSCAPSVQMKIKELYRRRFPRKTLGPSDLSLLSLPPGTSPVGSPGPLAPIPPTLLTPGTLLGPKREVDMHPPLPQPVHPDVTMKPLPFYEVYGELIRPTTLASTSSQRFEEAHFTFALTPQQLQQILTSREVLPGAKCDYTIQVQLRFCLCETSCPQEDYFPPNLFVKVNGKLCPLPGYLPPTKNGAEPKRPSRPINITPLARLSATVPNTIVVNWSSEFGRNYSLSVYLVRQLTAGTLLQKLRAKGIRNPDHSRALIKEKLTADPDSEVATTSLRVSLMCPLGKMRLTVPCRALTCAHLQSFDAALYLQMNEKKPTWTCPVCDKKAPYESLIIDGLFMEILNSCSDCDEIQFMEDGSWCPMKPKKEASEVCPPPGYGLDGLQYSAVQEGIQPESKKRVEVIDLTIESSSDEEDLPPTKKHCPVTSAAIPALPGSKGALTSGHQPSSVLRSPAMGTLGSDFLSSLPLHEYPPAFPLGADIQGLDLFSFLQTESQHYGPSVITSLDEQDTLGHFFQYRGTPSHFLGPLAPTLGSSHRSSTPAPPPGRVSSIVAPGSSLREGHGGPLPSGPSLTGCRSDVISLD.

Positions 1 to 200 are interaction with CCAR2; the sequence is MAELGELKHM…QLRFCLCETS (200 aa). The region spanning 11–45 is the SAP domain; sequence VMSFRVSELQVLLGFAGRNKSGRKHELLAKALHLL. Residues 19–23 carry the LXXLL motif motif; that stretch reads LQVLL. Glycyl lysine isopeptide (Lys-Gly) (interchain with G-Cter in SUMO2) cross-links involve residues K46, K56, K230, and K307. A PINIT domain is found at 115 to 280; it reads MHPPLPQPVH…SLSVYLVRQL (166 aa). The segment at 312–393 adopts an SP-RING-type zinc-finger fold; that stretch reads PDSEVATTSL…FMEILNSCSD (82 aa). C343, H345, C366, and C369 together coordinate Zn(2+). Residues 450-460 form an SUMO1-binding region; that stretch reads LTIESSSDEED. Glycyl lysine isopeptide (Lys-Gly) (interchain with G-Cter in SUMO2) cross-links involve residues K466 and K482. The disordered stretch occupies residues 571 to 628; the sequence is GPLAPTLGSSHRSSTPAPPPGRVSSIVAPGSSLREGHGGPLPSGPSLTGCRSDVISLD.

It belongs to the PIAS family. As to quaternary structure, monomer. Interacts with PLAG1 and ZFHX3. Interacts with STAT5A; the interaction occurs on stimulation by PRL. Binds SUMO1 and UBE2I. Interacts with AR, BCL11A, HMGA2, IRF1 and NCOA2. Interacts with MITF; the interaction inhibits the transcriptional activity of MITF. Interacts with STAT3; the interaction occurs on stimulation by IL6, CNTF or OSM and inhibits the DNA binding activity of STAT3. Interacts with GFI1; the interaction relieves the inhibitory effect of PIAS3 on STAT3-mediated transcriptional activity. Interacts with MTA1. Interacts with CCAR2 (via N-terminus). Interacts with TRIM8. Interacts with PRDM1. In terms of processing, sumoylated. In terms of tissue distribution, expressed in kidney, heart, spleen, brain and cerebellum; weak expression, if any, in liver and lung.

It localises to the cytoplasm. The protein resides in the nucleus. It is found in the nucleus speckle. Its pathway is protein modification; protein sumoylation. Functions as an E3-type small ubiquitin-like modifier (SUMO) ligase, stabilizing the interaction between UBE2I and the substrate, and as a SUMO-tethering factor. Plays a crucial role as a transcriptional coregulation in various cellular pathways, including the STAT pathway and the steroid hormone signaling pathway. Repressor of STAT3 signaling via inhibiting STAT3 DNA-binding and suppressing cell growth. Repressor of MITF transcriptional activity. Enhances the sumoylation of MTA1 and may participate in its paralog-selective sumoylation. Sumoylates CCAR2 which promotes its interaction with SIRT1. Diminishes the sumoylation of ZFHX3 by preventing the colocalization of ZFHX3 with SUMO1 in the nucleus. This chain is E3 SUMO-protein ligase PIAS3 (Pias3), found in Mus musculus (Mouse).